Reading from the N-terminus, the 150-residue chain is Ribonuclease H (150 aa).

In terms of domain architecture, RNase H type-1 spans 1–141; that stretch reads MRPVIIHTDG…ADQLARDGLT (141 aa). The Mg(2+) site is built by Asp-9, Glu-47, Asp-69, and Asp-133.

Belongs to the RNase H family. Monomer. Requires Mg(2+) as cofactor.

The protein localises to the cytoplasm. The catalysed reaction is Endonucleolytic cleavage to 5'-phosphomonoester.. Functionally, endonuclease that specifically degrades the RNA of RNA-DNA hybrids. This is Ribonuclease H from Rhodopseudomonas palustris (strain BisB5).